A 234-amino-acid polypeptide reads, in one-letter code: Segregation and condensation protein A (234 aa).

This sequence belongs to the ScpA family. In terms of assembly, component of a cohesin-like complex composed of ScpA, ScpB and the Smc homodimer, in which ScpA and ScpB bind to the head domain of Smc. The presence of the three proteins is required for the association of the complex with DNA.

Its subcellular location is the cytoplasm. Participates in chromosomal partition during cell division. May act via the formation of a condensin-like complex containing Smc and ScpB that pull DNA away from mid-cell into both cell halves. In Streptococcus pyogenes serotype M6 (strain ATCC BAA-946 / MGAS10394), this protein is Segregation and condensation protein A.